The primary structure comprises 276 residues: Insulin-induced gene 1 protein (276 aa).

2 disordered regions span residues 1 to 26 (MPRL…PRAS) and 49 to 73 (AAHG…QGSS). Topologically, residues 1–83 (MPRLDDHLWR…SHVNSWHHHL (83 aa)) are cytoplasmic. Residues 16–25 (GTKHRSHPRA) show a composition bias toward basic residues. Residues 84–106 (VQRSLVLFSVGVVLALVLNLLQV) form a helical membrane-spanning segment. Residues 107–125 (QRNVTLFPDEVIATIFSSA) lie on the Extracellular side of the membrane. A helical membrane pass occupies residues 126–143 (WWVPPCCGTAAAVVGLLY). At 144-158 (PCIDSHLGEPHKFKR) the chain is on the cytoplasmic side. Glycyl lysine isopeptide (Lys-Gly) (interchain with G-Cter in ubiquitin) cross-links involve residues lysine 155 and lysine 157. Residues 159-181 (EWASVMRCVAVFVGINHASAKLD) form a helical membrane-spanning segment. Topologically, residues 182–184 (FAN) are extracellular. Residues 185–203 (NVQLSLTLAALSLGLWWTF) form a helical membrane-spanning segment. The Cytoplasmic segment spans residues 204–208 (DRSRS). Serine 206 carries the phosphoserine modification. The chain crosses the membrane as a helical span at residues 209–230 (GLGLGITIAFLATLITQLLVYN). Residues 231 to 244 (GVYQYTSPDFLYIR) lie on the Extracellular side of the membrane. A helical transmembrane segment spans residues 245–262 (SWLPCIFFSGGVTVGNIG). Over 263–276 (RQLAMGVPEKPHSD) the chain is Cytoplasmic. Residues 270-276 (PEKPHSD) carry the KxHxx motif.

Belongs to the INSIG family. As to quaternary structure, interacts with SCAP; interaction is direct and only takes place in the presence of sterols; it prevents interaction between SCAP and the coat protein complex II (COPII). Associates with the SCAP-SREBP complex (composed of SCAP and SREBF1/SREBP1 or SREBF2/SREBP2); association is mediated via its interaction with SCAP and only takes place in the presence of sterols. Interaction with SCAP is mutually exclusive with PAQR3. Interacts with HMGCR (via its SSD); the interaction, accelerated by sterols, leads to the recruitment of HMGCR to AMFR/gp78 for its ubiquitination by the sterol-mediated ERAD pathway. Interacts with AMFR/gp78 (via its membrane domain); the interaction recruits HMCR at the ER membrane for its ubiquitination and degradation by the sterol-mediated ERAD pathway. Interacts with SOAT2/ACAT2; leading to promote recruitment of AMFR/gp78 and subsequent ubiquitination of SOAT2/ACAT2. Interacts with RNF139. Interacts with RNF145. In terms of processing, phosphorylation at Ser-206 by PCK1 reduces binding to oxysterol, disrupting the interaction between INSIG1 and SCAP, thereby promoting nuclear translocation of SREBP proteins (SREBF1/SREBP1 or SREBF2/SREBP2) and subsequent transcription of downstream lipogenesis-related genes. Ubiquitinated by AMFR/gp78 in response to sterol deprivation, leading to its degradation: when the SCAP-SREBP complex becomes dissociated from INSIG1, INSIG1 is then ubiquitinated and degraded in proteasomes. Although ubiquitination is required for rapid INSIG1 degradation, it is not required for release of the SCAP-SREBP complex. Ubiquitinated by RNF139.

It is found in the endoplasmic reticulum membrane. Oxysterol-binding protein that mediates feedback control of cholesterol synthesis by controlling both endoplasmic reticulum to Golgi transport of SCAP and degradation of HMGCR. Acts as a negative regulator of cholesterol biosynthesis by mediating the retention of the SCAP-SREBP complex in the endoplasmic reticulum, thereby blocking the processing of sterol regulatory element-binding proteins (SREBPs) SREBF1/SREBP1 and SREBF2/SREBP2. Binds oxysterol, including 25-hydroxycholesterol, regulating interaction with SCAP and retention of the SCAP-SREBP complex in the endoplasmic reticulum. In presence of oxysterol, interacts with SCAP, retaining the SCAP-SREBP complex in the endoplasmic reticulum, thereby preventing SCAP from escorting SREBF1/SREBP1 and SREBF2/SREBP2 to the Golgi. Sterol deprivation or phosphorylation by PCK1 reduce oxysterol-binding, disrupting the interaction between INSIG1 and SCAP, thereby promoting Golgi transport of the SCAP-SREBP complex, followed by processing and nuclear translocation of SREBF1/SREBP1 and SREBF2/SREBP2. Also regulates cholesterol synthesis by regulating degradation of HMGCR: initiates the sterol-mediated ubiquitin-mediated endoplasmic reticulum-associated degradation (ERAD) of HMGCR via recruitment of the reductase to the ubiquitin ligases AMFR/gp78 and/or RNF139. Also regulates degradation of SOAT2/ACAT2 when the lipid levels are low: initiates the ubiquitin-mediated degradation of SOAT2/ACAT2 via recruitment of the ubiquitin ligases AMFR/gp78. This chain is Insulin-induced gene 1 protein, found in Bos taurus (Bovine).